Reading from the N-terminus, the 149-residue chain is D-aminoacyl-tRNA deacylase (149 aa).

The Gly-cisPro motif, important for rejection of L-amino acids signature appears at 137–138; it reads GP.

The protein belongs to the DTD family. As to quaternary structure, homodimer.

It is found in the cytoplasm. It carries out the reaction glycyl-tRNA(Ala) + H2O = tRNA(Ala) + glycine + H(+). The catalysed reaction is a D-aminoacyl-tRNA + H2O = a tRNA + a D-alpha-amino acid + H(+). Its function is as follows. An aminoacyl-tRNA editing enzyme that deacylates mischarged D-aminoacyl-tRNAs. Also deacylates mischarged glycyl-tRNA(Ala), protecting cells against glycine mischarging by AlaRS. Acts via tRNA-based rather than protein-based catalysis; rejects L-amino acids rather than detecting D-amino acids in the active site. By recycling D-aminoacyl-tRNA to D-amino acids and free tRNA molecules, this enzyme counteracts the toxicity associated with the formation of D-aminoacyl-tRNA entities in vivo and helps enforce protein L-homochirality. In Herminiimonas arsenicoxydans, this protein is D-aminoacyl-tRNA deacylase.